Consider the following 482-residue polypeptide: tRNA sulfurtransferase (482 aa).

The 105-residue stretch at 61–165 (QQVLEILTTT…DDKLNQILAH (105 aa)) folds into the THUMP domain. ATP is bound by residues 183-184 (LI), K265, G287, and Q296. Cysteines 344 and 456 form a disulfide. Residues 404–482 (IEEHAVVLDI…GFNNVKVYRP (79 aa)) enclose the Rhodanese domain. The active-site Cysteine persulfide intermediate is C456.

The protein belongs to the ThiI family.

It is found in the cytoplasm. It catalyses the reaction [ThiI sulfur-carrier protein]-S-sulfanyl-L-cysteine + a uridine in tRNA + 2 reduced [2Fe-2S]-[ferredoxin] + ATP + H(+) = [ThiI sulfur-carrier protein]-L-cysteine + a 4-thiouridine in tRNA + 2 oxidized [2Fe-2S]-[ferredoxin] + AMP + diphosphate. It carries out the reaction [ThiS sulfur-carrier protein]-C-terminal Gly-Gly-AMP + S-sulfanyl-L-cysteinyl-[cysteine desulfurase] + AH2 = [ThiS sulfur-carrier protein]-C-terminal-Gly-aminoethanethioate + L-cysteinyl-[cysteine desulfurase] + A + AMP + 2 H(+). It functions in the pathway cofactor biosynthesis; thiamine diphosphate biosynthesis. In terms of biological role, catalyzes the ATP-dependent transfer of a sulfur to tRNA to produce 4-thiouridine in position 8 of tRNAs, which functions as a near-UV photosensor. Also catalyzes the transfer of sulfur to the sulfur carrier protein ThiS, forming ThiS-thiocarboxylate. This is a step in the synthesis of thiazole, in the thiamine biosynthesis pathway. The sulfur is donated as persulfide by IscS. The polypeptide is tRNA sulfurtransferase (Vibrio vulnificus (strain YJ016)).